A 133-amino-acid polypeptide reads, in one-letter code: Ribonuclease P protein component (133 aa).

Belongs to the RnpA family. In terms of assembly, consists of a catalytic RNA component (M1 or rnpB) and a protein subunit.

It carries out the reaction Endonucleolytic cleavage of RNA, removing 5'-extranucleotides from tRNA precursor.. RNaseP catalyzes the removal of the 5'-leader sequence from pre-tRNA to produce the mature 5'-terminus. It can also cleave other RNA substrates such as 4.5S RNA. The protein component plays an auxiliary but essential role in vivo by binding to the 5'-leader sequence and broadening the substrate specificity of the ribozyme. This Corynebacterium glutamicum (strain R) protein is Ribonuclease P protein component.